A 666-amino-acid chain; its full sequence is Probable potassium transport system protein Kup (666 aa).

12 consecutive transmembrane segments (helical) span residues 16–36, 58–78, 100–120, 149–169, 173–193, 221–241, 253–273, 294–314, 343–363, 373–393, 399–419, and 424–444; these read GFIIALGIVYGDIGTSPLYTM, ISLIIWTLTLITTIKYVLIAL, PWLIVPAMIGGATLLSDGALT, IITTLVILIVLFGIQRFGTGF, IFGPVMFIWFSFLGVSGFFNM, IFILGSIFLATTGAEALYSDL, WPFVKMCIVLSYCGQAAWILA, VYLVSLATLAAIIASQALISG, LYIPVINWILFAVTSCTVLAF, YGLAITITMLMTTILLKYYLI, PILAHLVMAFFALVEFIFFLA, and FMHGGYAVVILALAIVFVMFI.

This sequence belongs to the HAK/KUP transporter (TC 2.A.72) family.

The protein localises to the cell membrane. It carries out the reaction K(+)(in) + H(+)(in) = K(+)(out) + H(+)(out). Transport of potassium into the cell. Likely operates as a K(+):H(+) symporter. The sequence is that of Probable potassium transport system protein Kup from Streptococcus pyogenes serotype M3 (strain ATCC BAA-595 / MGAS315).